A 117-amino-acid polypeptide reads, in one-letter code: Chondroitin proteoglycan 7 (117 aa).

Residues 1 to 19 (MQTITLLALLACIAVPIFA) form the signal peptide. The disordered stretch occupies residues 31–97 (VEASGEGSGE…SGENLSNGIV (67 aa)). 2 stretches are compositionally biased toward low complexity: residues 32–41 (EASGEGSGES) and 48–57 (ESSGEGSGES). 5 O-linked (Xyl...) (chondroitin sulfate) serine glycosylation sites follow: Ser66, Ser70, Ser74, Ser84, and Ser88. Residues 75 to 95 (GASDAVLESSGEGSGENLSNG) are compositionally biased toward low complexity. N-linked (GlcNAc...) asparagine glycosylation occurs at Asn91.

The chain is Chondroitin proteoglycan 7 (cpg-7) from Caenorhabditis briggsae.